Reading from the N-terminus, the 396-residue chain is Acetyl-CoA acetyltransferase (396 aa).

Catalysis depends on C88, which acts as the Acyl-thioester intermediate. Active-site proton acceptor residues include H352 and C382.

Belongs to the thiolase-like superfamily. Thiolase family. In terms of assembly, homotetramer.

It catalyses the reaction 2 acetyl-CoA = acetoacetyl-CoA + CoA. Its pathway is biopolymer metabolism; poly-(R)-3-hydroxybutanoate biosynthesis. Its function is as follows. When expressed in E.coli with Synechocystis PhaB, PhaC and PhaE confers the ability to synthesize up to 12% (w/w) poly(3-hydroxybutyrate) (PHB) depending on the carbon source. The chain is Acetyl-CoA acetyltransferase from Synechocystis sp. (strain ATCC 27184 / PCC 6803 / Kazusa).